The chain runs to 355 residues: Guanine nucleotide-binding protein G(i) subunit alpha-2 (355 aa).

A lipid anchor (N-myristoyl glycine) is attached at Gly2. Cys3 is lipidated: S-palmitoyl cysteine. The G-alpha domain maps to 32–355; the sequence is REVKLLLLGA…KNNLKDCGLF (324 aa). Residues 35–48 are G1 motif; it reads KLLLLGAGESGKST. Residues 40 to 47, 176 to 182, 201 to 205, 270 to 273, and Ala327 each bind GTP; these read GAGESGKS, LRTRVKT, DVGGQ, and NKKD. Positions 47 and 182 each coordinate Mg(2+). Residues 174 to 182 form a G2 motif region; that stretch reads DVLRTRVKT. The segment at 197-206 is G3 motif; sequence FKMFDVGGQR. A G4 motif region spans residues 266–273; the sequence is ILFLNKKD. Positions 325-330 are G5 motif; sequence TCATDT.

It belongs to the G-alpha family. G(i/o/t/z) subfamily. G proteins are composed of 3 units; alpha, beta and gamma. The alpha chain contains the guanine nucleotide binding site. In this context, interacts with GNB2. Interacts with UNC5B. Interacts with GPSM1. Interacts with RGS12 and RGS14. Interacts (inactive GDP-bound form) with NUCB1 (via GBA motif); the interaction leads to activation of GNAI3. Interacts (inactive GDP-bound form) with CCDC88C/DAPLE (via GBA motif). Interacts (inactive GDP-bound form) with CCDC8A/GIV (via GBA motif). Interacts with CXCR1 and CXCR2.

Its subcellular location is the cytoplasm. It localises to the cytoskeleton. The protein localises to the microtubule organizing center. The protein resides in the centrosome. It is found in the cell membrane. Its subcellular location is the membrane. Its function is as follows. Guanine nucleotide-binding proteins (G proteins) are involved as modulators or transducers in various transmembrane signaling systems. The G(i) proteins are involved in hormonal regulation of adenylate cyclase: they inhibit the cyclase in response to beta-adrenergic stimuli. May play a role in cell division. This chain is Guanine nucleotide-binding protein G(i) subunit alpha-2 (GNAI2), found in Canis lupus familiaris (Dog).